The chain runs to 338 residues: Phenylalanine--tRNA ligase alpha subunit (338 aa).

E252 serves as a coordination point for Mg(2+).

This sequence belongs to the class-II aminoacyl-tRNA synthetase family. Phe-tRNA synthetase alpha subunit type 1 subfamily. As to quaternary structure, tetramer of two alpha and two beta subunits. Requires Mg(2+) as cofactor.

The protein resides in the cytoplasm. It catalyses the reaction tRNA(Phe) + L-phenylalanine + ATP = L-phenylalanyl-tRNA(Phe) + AMP + diphosphate + H(+). This chain is Phenylalanine--tRNA ligase alpha subunit, found in Mycoplasmoides gallisepticum (strain R(low / passage 15 / clone 2)) (Mycoplasma gallisepticum).